Consider the following 231-residue polypeptide: Lipoprotein-releasing system ATP-binding protein LolD (231 aa).

Positions L11–F231 constitute an ABC transporter domain. ATP is bound at residue A47 to S54.

This sequence belongs to the ABC transporter superfamily. Lipoprotein translocase (TC 3.A.1.125) family. The complex is composed of two ATP-binding proteins (LolD) and two transmembrane proteins (LolC and LolE).

Its subcellular location is the cell inner membrane. Functionally, part of the ABC transporter complex LolCDE involved in the translocation of mature outer membrane-directed lipoproteins, from the inner membrane to the periplasmic chaperone, LolA. Responsible for the formation of the LolA-lipoprotein complex in an ATP-dependent manner. The sequence is that of Lipoprotein-releasing system ATP-binding protein LolD from Gluconobacter oxydans (strain 621H) (Gluconobacter suboxydans).